The chain runs to 145 residues: Large ribosomal subunit protein uL15 (145 aa).

Residues 1–52 are disordered; sequence MRLNTLSPAAGSKRVKHRPGRGIGSGLGKTGGRGVKGQTSRSGGGKVRNGFE. 2 stretches are compositionally biased toward gly residues: residues 21 to 35 and 42 to 52; these read RGIG…GRGV and SGGGKVRNGFE.

This sequence belongs to the universal ribosomal protein uL15 family. Part of the 50S ribosomal subunit.

Binds to the 23S rRNA. This is Large ribosomal subunit protein uL15 from Aeromonas hydrophila subsp. hydrophila (strain ATCC 7966 / DSM 30187 / BCRC 13018 / CCUG 14551 / JCM 1027 / KCTC 2358 / NCIMB 9240 / NCTC 8049).